The primary structure comprises 252 residues: Mannose-P-dolichol utilization defect 1 protein homolog (252 aa).

One can recognise a PQ-loop 1 domain in the interval 34–100 (KALLSKGLGL…HGYPFSAWGD (67 aa)). 7 consecutive transmembrane segments (helical) span residues 41–61 (LGLA…LKIL), 69–89 (INIV…SYNF), 98–118 (WGDS…VLFF), 126–146 (GLFL…LTPM), 148–168 (VLFT…LSQA), 180–200 (LSAA…FTSI), and 207–227 (MIIL…GQLI). A PQ-loop 2 domain is found at 157 to 211 (IPILLVGKLSQAYTNYQAGSTGQLSAATVIMMFAGSVARIFTSIQETGDFMIILT).

Belongs to the MPDU1 (TC 2.A.43.3) family.

The protein resides in the membrane. The chain is Mannose-P-dolichol utilization defect 1 protein homolog from Drosophila melanogaster (Fruit fly).